A 274-amino-acid chain; its full sequence is Sulfur carrier protein FdhD (274 aa).

Cys-120 acts as the Cysteine persulfide intermediate in catalysis.

The protein belongs to the FdhD family.

The protein localises to the cytoplasm. Its function is as follows. Required for formate dehydrogenase (FDH) activity. Acts as a sulfur carrier protein that transfers sulfur from IscS to the molybdenum cofactor prior to its insertion into FDH. The protein is Sulfur carrier protein FdhD of Burkholderia mallei (strain ATCC 23344).